The sequence spans 260 residues: MMLEVPRYTWRSPSNIKVVAEPGLGPGRWLLPGAHQPSCPPAPHQGPLQKPSQSAPGPTASASAPPRPRRRPPPQRPHRCPDCDKAFSYPSKLATHRLAHGGARPHPCPDCPKAFSYPSKLAAHRLTHSGARPHPCPHCPKAFGHRSKLAAHLWTHAPTRPYPCPDCPKSFCYPSKLAAHRHTHHATDARPYPCPHCPKAFSFPSKLAAHRLCHDPPTAPGSQATARHRCSSCGQAFGQRRLLLLHQRSHHQVEHKGERD.

Residues 22 to 81 (PGLGPGRWLLPGAHQPSCPPAPHQGPLQKPSQSAPGPTASASAPPRPRRRPPPQRPHRCP) are disordered. The segment covering 51–64 (PSQSAPGPTASASA) has biased composition (low complexity). The span at 67–78 (RPRRRPPPQRPH) shows a compositional bias: basic residues. 6 C2H2-type zinc fingers span residues 78 to 100 (HRCPDCDKAFSYPSKLATHRLAH), 106 to 128 (HPCPDCPKAFSYPSKLAAHRLTH), 134 to 156 (HPCPHCPKAFGHRSKLAAHLWTH), 162 to 184 (YPCPDCPKSFCYPSKLAAHRHTH), 192 to 214 (YPCPHCPKAFSFPSKLAAHRLCH), and 228 to 255 (HRCSSCGQAFGQRRLLLLHQRSHHQVEH).

It belongs to the krueppel C2H2-type zinc-finger protein family.

It localises to the nucleus. Its function is as follows. May be involved in transcriptional regulation. The sequence is that of Zinc finger protein 575 (ZNF575) from Macaca fascicularis (Crab-eating macaque).